A 368-amino-acid chain; its full sequence is Phospho-N-acetylmuramoyl-pentapeptide-transferase (368 aa).

The next 9 membrane-spanning stretches (helical) occupy residues 30-50, 72-92, 99-119, 139-159, 170-190, 201-221, 238-258, 264-286, and 345-365; these read AAAVTSLLICLVAGPAFIKYL, LPTMGGIMIIFAIEVSVFLWA, VWLIMVAVFWMGVIGFLDDYM, VLLGLFIGLYTWFDPAFSVLL, LTIDYGIFYIPVVIFIITAVS, GLASGSSAIVVFALGGFAYLA, GGEIAVVSMAIVMACVGFLWF, EIIMGDTGSLALGSAIAVIALLI, and KIVIRFWIVTVLFFLASLMTL.

It belongs to the glycosyltransferase 4 family. MraY subfamily. The cofactor is Mg(2+).

Its subcellular location is the cell inner membrane. It catalyses the reaction UDP-N-acetyl-alpha-D-muramoyl-L-alanyl-gamma-D-glutamyl-meso-2,6-diaminopimeloyl-D-alanyl-D-alanine + di-trans,octa-cis-undecaprenyl phosphate = di-trans,octa-cis-undecaprenyl diphospho-N-acetyl-alpha-D-muramoyl-L-alanyl-D-glutamyl-meso-2,6-diaminopimeloyl-D-alanyl-D-alanine + UMP. It participates in cell wall biogenesis; peptidoglycan biosynthesis. Its function is as follows. Catalyzes the initial step of the lipid cycle reactions in the biosynthesis of the cell wall peptidoglycan: transfers peptidoglycan precursor phospho-MurNAc-pentapeptide from UDP-MurNAc-pentapeptide onto the lipid carrier undecaprenyl phosphate, yielding undecaprenyl-pyrophosphoryl-MurNAc-pentapeptide, known as lipid I. This chain is Phospho-N-acetylmuramoyl-pentapeptide-transferase, found in Chlorobium limicola (strain DSM 245 / NBRC 103803 / 6330).